Reading from the N-terminus, the 727-residue chain is Probable glutamate carboxypeptidase ARB_02390 (727 aa).

The signal sequence occupies residues 1-18; sequence MIVKSLSLLALAAATVEG. 2 N-linked (GlcNAc...) asparagine glycosylation sites follow: N60 and N80. In terms of domain architecture, PA spans 158–296; the sequence is ATAEYVYVGR…ISQLDAQPIL (139 aa). Residue R197 coordinates substrate. N-linked (GlcNAc...) asparagine glycosylation occurs at N223. A disordered region spans residues 255–279; the sequence is FPGDPTTPGYPSRPDSPRKDKSPVV. Residues T261 and Y264 each contribute to the Ca(2+) site. The NAALADase stretch occupies residues 266–565; it reads SRPDSPRKDK…QFLGLLGYHL (300 aa). N310, N319, and N353 each carry an N-linked (GlcNAc...) asparagine glycan. H366 is a binding site for Zn(2+). Catalysis depends on E414, which acts as the For NAALADase activity. Residue E415 coordinates Zn(2+). Residues E423 and E426 each coordinate Ca(2+). Residue D443 coordinates Zn(2+). Residues 516-518 and Y530 contribute to the substrate site; that span reads TGA. H531 contacts Zn(2+). S604 (charge relay system) is an active-site residue. An N-linked (GlcNAc...) asparagine glycan is attached at N614. Residue H665 is the Charge relay system of the active site. Position 675 to 676 (675 to 676) interacts with substrate; the sequence is GY. N-linked (GlcNAc...) asparagine glycosylation is present at N692.

This sequence belongs to the peptidase M28 family. M28B subfamily. The cofactor is Zn(2+).

The protein resides in the secreted. It catalyses the reaction Release of an unsubstituted, C-terminal glutamyl residue, typically from Ac-Asp-Glu or folylpoly-gamma-glutamates.. Its function is as follows. Has both folate hydrolase and N-acetylated-alpha-linked-acidic dipeptidase (NAALADase) activity. Also exhibits a dipeptidyl-peptidase IV type activity. The sequence is that of Probable glutamate carboxypeptidase ARB_02390 from Arthroderma benhamiae (strain ATCC MYA-4681 / CBS 112371) (Trichophyton mentagrophytes).